Here is a 296-residue protein sequence, read N- to C-terminus: Elongation factor Ts (296 aa).

The tract at residues 79–82 (TDFV) is involved in Mg(2+) ion dislocation from EF-Tu.

This sequence belongs to the EF-Ts family.

The protein localises to the cytoplasm. Associates with the EF-Tu.GDP complex and induces the exchange of GDP to GTP. It remains bound to the aminoacyl-tRNA.EF-Tu.GTP complex up to the GTP hydrolysis stage on the ribosome. The polypeptide is Elongation factor Ts (tsf) (Spiroplasma citri).